Reading from the N-terminus, the 749-residue chain is Protein O-mannosyl-transferase 2 (749 aa).

Residues 1 to 30 form a disordered region; sequence MAASVVKTPKCPRRGSAKEQQSKASPKSNN. Residues 34-54 form a helical membrane-spanning segment; the sequence is NWHWWILLASVFLITFATRFY. 3 N-linked (GlcNAc...) asparagine glycosylation sites follow: Asn78, Asn104, and Asn117. 5 consecutive transmembrane segments (helical) span residues 126 to 146, 173 to 193, 204 to 224, 226 to 246, and 266 to 286; these read YFCTTLGALIMPMGFDTVYDL, ILLDPILLFFMMGSVWGMVKI, SVRWWFWLFLTGTMLSCTISV, FVGLFVVLLVGLHTATELWLI, and IALILWPILLYTLFFYIHLSV. Asn288 and Asn312 each carry an N-linked (GlcNAc...) asparagine glycan. 3 MIR domains span residues 316–372, 382–438, and 443–499; these read PRDV…IKPH, LQLL…VLIV, and NETV…VEDN. N-linked (GlcNAc...) asparagine glycosylation is present at Asn443. 4 consecutive transmembrane segments (helical) span residues 572 to 592, 645 to 665, 669 to 689, and 703 to 723; these read IWWSNLVFLALFVAVFLGNAI, LGAAAWLFVGWLLHYLPFWAM, LYFHHYFPALIFNSLLTGVMF, and VLLGGLLSLIVYSFALFSPLA. Residue Asn735 is glycosylated (N-linked (GlcNAc...) asparagine).

The protein belongs to the glycosyltransferase 39 family. In terms of assembly, interacts with Rt/POMT1.

The protein resides in the endoplasmic reticulum membrane. It catalyses the reaction a di-trans,poly-cis-dolichyl beta-D-mannosyl phosphate + L-seryl-[protein] = 3-O-(alpha-D-mannosyl)-L-seryl-[protein] + a di-trans,poly-cis-dolichyl phosphate + H(+). It carries out the reaction a di-trans,poly-cis-dolichyl beta-D-mannosyl phosphate + L-threonyl-[protein] = 3-O-(alpha-D-mannosyl)-L-threonyl-[protein] + a di-trans,poly-cis-dolichyl phosphate + H(+). It functions in the pathway protein modification; protein glycosylation. Rt/POMT1 and tw/POMT2 function as a protein O-mannosyltransferase in association with each other to generate and maintain normal muscle development. The protein is Protein O-mannosyl-transferase 2 of Drosophila pseudoobscura pseudoobscura (Fruit fly).